A 378-amino-acid chain; its full sequence is Ribosomal RNA large subunit methyltransferase G (378 aa).

The protein belongs to the methyltransferase superfamily. RlmG family.

Its subcellular location is the cytoplasm. It carries out the reaction guanosine(1835) in 23S rRNA + S-adenosyl-L-methionine = N(2)-methylguanosine(1835) in 23S rRNA + S-adenosyl-L-homocysteine + H(+). Functionally, specifically methylates the guanine in position 1835 (m2G1835) of 23S rRNA. The sequence is that of Ribosomal RNA large subunit methyltransferase G from Shewanella baltica (strain OS195).